The following is a 118-amino-acid chain: Ribosome-binding factor A (118 aa).

It belongs to the RbfA family. Monomer. Binds 30S ribosomal subunits, but not 50S ribosomal subunits or 70S ribosomes.

Its subcellular location is the cytoplasm. Its function is as follows. One of several proteins that assist in the late maturation steps of the functional core of the 30S ribosomal subunit. Associates with free 30S ribosomal subunits (but not with 30S subunits that are part of 70S ribosomes or polysomes). Required for efficient processing of 16S rRNA. May interact with the 5'-terminal helix region of 16S rRNA. The sequence is that of Ribosome-binding factor A from Geobacter metallireducens (strain ATCC 53774 / DSM 7210 / GS-15).